The sequence spans 95 residues: Large ribosomal subunit protein uL23 (95 aa).

Belongs to the universal ribosomal protein uL23 family. In terms of assembly, part of the 50S ribosomal subunit. Contacts protein L29, and trigger factor when it is bound to the ribosome.

One of the early assembly proteins it binds 23S rRNA. One of the proteins that surrounds the polypeptide exit tunnel on the outside of the ribosome. Forms the main docking site for trigger factor binding to the ribosome. The chain is Large ribosomal subunit protein uL23 from Desulforamulus reducens (strain ATCC BAA-1160 / DSM 100696 / MI-1) (Desulfotomaculum reducens).